A 124-amino-acid chain; its full sequence is Transcription initiation factor IIA subunit 2 (124 aa).

It belongs to the TFIIA subunit 2 family. In terms of assembly, TFIIA is a heterodimer composed of the large TOA1 and the small TOA2 subunits.

It localises to the nucleus. Its function is as follows. TFIIA is a component of the transcription machinery of RNA polymerase II and plays an important role in transcriptional activation. TFIIA in a complex with tbp mediates transcriptional activity. This chain is Transcription initiation factor IIA subunit 2 (TOA2), found in Cryptococcus neoformans var. neoformans serotype D (strain JEC21 / ATCC MYA-565) (Filobasidiella neoformans).